The chain runs to 727 residues: 1,4-alpha-glucan branching enzyme GlgB (727 aa).

Asp405 acts as the Nucleophile in catalysis. Glu458 acts as the Proton donor in catalysis.

It belongs to the glycosyl hydrolase 13 family. GlgB subfamily. In terms of assembly, monomer.

It catalyses the reaction Transfers a segment of a (1-&gt;4)-alpha-D-glucan chain to a primary hydroxy group in a similar glucan chain.. The protein operates within glycan biosynthesis; glycogen biosynthesis. Catalyzes the formation of the alpha-1,6-glucosidic linkages in glycogen by scission of a 1,4-alpha-linked oligosaccharide from growing alpha-1,4-glucan chains and the subsequent attachment of the oligosaccharide to the alpha-1,6 position. The protein is 1,4-alpha-glucan branching enzyme GlgB of Yersinia enterocolitica serotype O:8 / biotype 1B (strain NCTC 13174 / 8081).